A 554-amino-acid chain; its full sequence is HMG box-containing protein 4 (554 aa).

Disordered regions lie at residues 15–368 (GTED…AYQV) and 417–469 (HKQN…PAKV). A compositionally biased stretch (basic and acidic residues) spans 75–88 (SSDDYHADHSTDSA). The segment covering 95-105 (SLPSPSSSDTA) has biased composition (low complexity). Over residues 113 to 123 (TSPQADTSTTH) the composition is skewed to polar residues. Composition is skewed to basic and acidic residues over residues 145-154 (PHKDYHKKSG) and 217-226 (LGREEIESRS). A compositionally biased stretch (polar residues) spans 236–251 (YTPRSGGTPDSASSTG). Residues 268–296 (MKKKKKSKKSKKKKDKHKDEKHKKHSKSK) show a composition bias toward basic residues. Residues 313 to 332 (LPSPPPPPATTPPTSPPSIP) are compositionally biased toward pro residues. The segment covering 341–357 (HTEEQSDKKKKKEDPEK) has biased composition (basic and acidic residues). Positions 359 to 427 (KKKNMSAYQV…KQNKAEATTV (69 aa)) form a DNA-binding region, HMG box. 2 stretches are compositionally biased toward low complexity: residues 433–445 (SSESAPKSKGSSS) and 454–467 (SPTSSVASFSTSPA).

As to quaternary structure, interacts with nlk.2.

The protein localises to the nucleus. In terms of biological role, negatively regulates Wnt/beta-catenin signaling during development. This Xenopus laevis (African clawed frog) protein is HMG box-containing protein 4 (hmgxb4).